Reading from the N-terminus, the 676-residue chain is DNA ligase (676 aa).

The segment covering 1-10 (MTQAHHDDAG) has biased composition (basic and acidic residues). The interval 1–23 (MTQAHHDDAGARNALQGGLATDP) is disordered. Residues 52 to 56 (DAAFD) and 95 to 96 (SL) each bind NAD(+). Lys148 serves as the catalytic N6-AMP-lysine intermediate. Residues Arg169, Glu203, and Lys330 each contribute to the NAD(+) site. Cys420, Cys423, Cys436, and Cys441 together coordinate Zn(2+). Positions 593-676 (EAEGPLAGLT…DKLIAERRGG (84 aa)) constitute a BRCT domain.

It belongs to the NAD-dependent DNA ligase family. LigA subfamily. Mg(2+) is required as a cofactor. Mn(2+) serves as cofactor.

The enzyme catalyses NAD(+) + (deoxyribonucleotide)n-3'-hydroxyl + 5'-phospho-(deoxyribonucleotide)m = (deoxyribonucleotide)n+m + AMP + beta-nicotinamide D-nucleotide.. Functionally, DNA ligase that catalyzes the formation of phosphodiester linkages between 5'-phosphoryl and 3'-hydroxyl groups in double-stranded DNA using NAD as a coenzyme and as the energy source for the reaction. It is essential for DNA replication and repair of damaged DNA. In Sorangium cellulosum (strain So ce56) (Polyangium cellulosum (strain So ce56)), this protein is DNA ligase.